The chain runs to 307 residues: UDP-N-acetylenolpyruvoylglucosamine reductase (307 aa).

Residues Thr-33–Gly-197 enclose the FAD-binding PCMH-type domain. Residue Arg-176 is part of the active site. Ser-226 functions as the Proton donor in the catalytic mechanism. The active site involves Glu-296.

It belongs to the MurB family. Requires FAD as cofactor.

It is found in the cytoplasm. The enzyme catalyses UDP-N-acetyl-alpha-D-muramate + NADP(+) = UDP-N-acetyl-3-O-(1-carboxyvinyl)-alpha-D-glucosamine + NADPH + H(+). It participates in cell wall biogenesis; peptidoglycan biosynthesis. Cell wall formation. The polypeptide is UDP-N-acetylenolpyruvoylglucosamine reductase (Staphylococcus aureus (strain MRSA252)).